A 324-amino-acid chain; its full sequence is Putative S-adenosyl-L-methionine-dependent methyltransferase MUL_0818 (324 aa).

Residues D138 and 167 to 168 (DL) each bind S-adenosyl-L-methionine.

It belongs to the UPF0677 family.

In terms of biological role, exhibits S-adenosyl-L-methionine-dependent methyltransferase activity. The polypeptide is Putative S-adenosyl-L-methionine-dependent methyltransferase MUL_0818 (Mycobacterium ulcerans (strain Agy99)).